The sequence spans 355 residues: Uroporphyrinogen decarboxylase (355 aa).

Residues 27–31 (RQAGR), F46, D77, Y154, S209, and H327 each bind substrate.

This sequence belongs to the uroporphyrinogen decarboxylase family. Homodimer.

It localises to the cytoplasm. The catalysed reaction is uroporphyrinogen III + 4 H(+) = coproporphyrinogen III + 4 CO2. It participates in porphyrin-containing compound metabolism; protoporphyrin-IX biosynthesis; coproporphyrinogen-III from 5-aminolevulinate: step 4/4. In terms of biological role, catalyzes the decarboxylation of four acetate groups of uroporphyrinogen-III to yield coproporphyrinogen-III. This chain is Uroporphyrinogen decarboxylase, found in Nitrosomonas europaea (strain ATCC 19718 / CIP 103999 / KCTC 2705 / NBRC 14298).